The sequence spans 208 residues: MIVIIDYDTGNTKSISKALDFIGLQNKISSNHAEILQADGVILPGVGAFPEAMQELGRRGLDVTLKEMAESGKPMLGVCLGMQLLLESSDEHLFTKGLGLIPGHVEKLPDEPGFAVPHMGWNQLEIKRSTPLTKKLGGEYVYYVHSYYANCPNEYIIATSGYSVEVPSMINKGNIYGAQFHPEKSGQIGLEILKGFKEVTESCKSSQQ.

Positions 1–206 (MIVIIDYDTG…KEVTESCKSS (206 aa)) constitute a Glutamine amidotransferase type-1 domain. The Nucleophile role is filled by Cys-79. Catalysis depends on residues His-181 and Glu-183.

Heterodimer of HisH and HisF.

The protein localises to the cytoplasm. The enzyme catalyses 5-[(5-phospho-1-deoxy-D-ribulos-1-ylimino)methylamino]-1-(5-phospho-beta-D-ribosyl)imidazole-4-carboxamide + L-glutamine = D-erythro-1-(imidazol-4-yl)glycerol 3-phosphate + 5-amino-1-(5-phospho-beta-D-ribosyl)imidazole-4-carboxamide + L-glutamate + H(+). It catalyses the reaction L-glutamine + H2O = L-glutamate + NH4(+). Its pathway is amino-acid biosynthesis; L-histidine biosynthesis; L-histidine from 5-phospho-alpha-D-ribose 1-diphosphate: step 5/9. Functionally, IGPS catalyzes the conversion of PRFAR and glutamine to IGP, AICAR and glutamate. The HisH subunit catalyzes the hydrolysis of glutamine to glutamate and ammonia as part of the synthesis of IGP and AICAR. The resulting ammonia molecule is channeled to the active site of HisF. The chain is Imidazole glycerol phosphate synthase subunit HisH from Listeria innocua serovar 6a (strain ATCC BAA-680 / CLIP 11262).